A 637-amino-acid chain; its full sequence is Protein kinase domain-containing protein ppk3 (637 aa).

A Protein kinase domain is found at M1 to I296. Residues K414 to L450 form an HEAT repeat. Positions N576–N586 are enriched in basic and acidic residues. The tract at residues N576–L637 is disordered. Acidic residues predominate over residues E608–V631.

The protein localises to the golgi apparatus. The sequence is that of Protein kinase domain-containing protein ppk3 (ppk3) from Schizosaccharomyces pombe (strain 972 / ATCC 24843) (Fission yeast).